Reading from the N-terminus, the 389-residue chain is Methylthioribose kinase (389 aa).

Residues Asn37, Lys52, and 106–108 (EDL) contribute to the ATP site. Residue Asp224 participates in substrate binding. 241-243 (DPE) contributes to the ATP binding site. Substrate is bound at residue Arg331.

It belongs to the methylthioribose kinase family. In terms of assembly, homodimer.

It catalyses the reaction 5-(methylsulfanyl)-D-ribose + ATP = 5-(methylsulfanyl)-alpha-D-ribose 1-phosphate + ADP + H(+). Its pathway is amino-acid biosynthesis; L-methionine biosynthesis via salvage pathway; S-methyl-5-thio-alpha-D-ribose 1-phosphate from S-methyl-5'-thioadenosine (hydrolase route): step 2/2. Functionally, catalyzes the phosphorylation of methylthioribose into methylthioribose-1-phosphate. The sequence is that of Methylthioribose kinase from Exiguobacterium sibiricum (strain DSM 17290 / CCUG 55495 / CIP 109462 / JCM 13490 / 255-15).